Here is a 723-residue protein sequence, read N- to C-terminus: ABC transporter F family member 4 (723 aa).

Positions 1–117 are disordered; it reads MGKKKSDESA…KEQKKREAKE (117 aa). Basic and acidic residues predominate over residues 18–31; it reads SGKDASKDSKKEKL. Positions 50-65 are enriched in polar residues; that stretch reads GSSSRTKAAPKSTSYT. Positions 72-84 are enriched in acidic residues; sequence PSDEEDDGESDEE. Residues 95-117 show a composition bias toward basic and acidic residues; that stretch reads KSEQRHLEISVTDKEQKKREAKE. The ABC transporter 1 domain maps to 163 to 423; that stretch reads ITIESFSVSA…EMNKKFDVYD (261 aa). 195–202 provides a ligand contact to ATP; sequence GPNGMGKS. 2 disordered regions span residues 256–275 and 427–472; these read LQKS…DDDD and KAAK…APEA. Residues 266 to 275 are compositionally biased toward acidic residues; sequence ENVDGEDDDD. A compositionally biased stretch (basic and acidic residues) spans 437 to 446; that stretch reads QQEKVKDRAK. The ABC transporter 2 domain occupies 496-721; sequence LQLIEVSFSY…DLQREIKAEV (226 aa). 530–537 serves as a coordination point for ATP; it reads GPNGAGKS.

This sequence belongs to the ABC transporter superfamily. ABCF family. EF3 (TC 3.A.1.121) subfamily.

The sequence is that of ABC transporter F family member 4 (ABCF4) from Arabidopsis thaliana (Mouse-ear cress).